A 126-amino-acid chain; its full sequence is Prostate and testis expressed protein 1 (126 aa).

The signal sequence occupies residues 1–21; sequence MDKSLLLELPILLCCFRALSG. The UPAR/Ly6 domain occupies 46 to 125; it reads VQCRMCHLQF…CRSHDLCNED (80 aa). 4 cysteine pairs are disulfide-bonded: C48-C75, C51-C60, C67-C94, and C98-C115.

The protein belongs to the PATE family. Expressed specifically in prostate cancer, normal prostate, and testis. Expressed in the epithelial cells of the prostate cancer and normal prostate tissues.

Its subcellular location is the secreted. This chain is Prostate and testis expressed protein 1 (PATE1), found in Homo sapiens (Human).